The primary structure comprises 278 residues: Large ribosomal subunit protein uL2 (278 aa).

Disordered regions lie at residues 33-53 (LTEG…TSRG) and 219-278 (LTRG…KKKR). Residues 269 to 278 (IRSRHAKKKR) are compositionally biased toward basic residues.

Belongs to the universal ribosomal protein uL2 family. As to quaternary structure, part of the 50S ribosomal subunit. Forms a bridge to the 30S subunit in the 70S ribosome.

In terms of biological role, one of the primary rRNA binding proteins. Required for association of the 30S and 50S subunits to form the 70S ribosome, for tRNA binding and peptide bond formation. It has been suggested to have peptidyltransferase activity; this is somewhat controversial. Makes several contacts with the 16S rRNA in the 70S ribosome. This chain is Large ribosomal subunit protein uL2, found in Sphingopyxis alaskensis (strain DSM 13593 / LMG 18877 / RB2256) (Sphingomonas alaskensis).